The following is a 76-amino-acid chain: Alpha/kappa-conotoxin-like pl14.3 (76 aa).

Positions 1 to 27 (MPSVRSVACCCLLWMMLSVQLVTPGSP) are cleaved as a signal peptide. The propeptide occupies 28-39 (ATAQLSGQRTAR). Intrachain disulfides connect Cys46–Cys61 and Cys50–Cys63. Asp64 carries the aspartic acid 1-amide modification. Residues 65–76 (GKRDVVSSSMAV) constitute a propeptide that is removed on maturation.

This sequence belongs to the conotoxin J superfamily. Expressed by the venom duct.

The protein resides in the secreted. In terms of biological role, highly inhibits both nicotinic acetylcholine receptors (neuronal (alpha-3/beta-4) and muscular (alpha-1/beta-1/epsilon/delta) subtypes) and the voltage-gated potassium channel Kv1.6/KCNA6 subtype. In Conus planorbis (Planorbis cone), this protein is Alpha/kappa-conotoxin-like pl14.3.